The chain runs to 93 residues: Small ribosomal subunit protein uS19 (93 aa).

Belongs to the universal ribosomal protein uS19 family.

Its function is as follows. Protein S19 forms a complex with S13 that binds strongly to the 16S ribosomal RNA. In Mycolicibacterium smegmatis (strain ATCC 700084 / mc(2)155) (Mycobacterium smegmatis), this protein is Small ribosomal subunit protein uS19.